The following is a 331-amino-acid chain: Pantothenate kinase (331 aa).

ATP is bound at residue 109-116 (GSVAVGKS).

The protein belongs to the prokaryotic pantothenate kinase family.

The protein resides in the cytoplasm. The catalysed reaction is (R)-pantothenate + ATP = (R)-4'-phosphopantothenate + ADP + H(+). It functions in the pathway cofactor biosynthesis; coenzyme A biosynthesis; CoA from (R)-pantothenate: step 1/5. In Rhizobium rhizogenes (strain K84 / ATCC BAA-868) (Agrobacterium radiobacter), this protein is Pantothenate kinase.